We begin with the raw amino-acid sequence, 878 residues long: Indoleacetate decarboxylase (878 aa).

A PFL domain is found at Asp42 to Leu750. Catalysis depends on Cys500, which acts as the Cysteine radical intermediate. The Proton acceptor role is filled by Glu502. Residues Gly758 to Leu878 form the Glycine radical domain. Gly853 carries the post-translational modification Glycine radical.

Belongs to the glycyl radical enzyme (GRE) family. In terms of assembly, homodimer (predominantly) and monomer. In terms of processing, requires the activating protein OsIADAE to generate the key active site glycyl radical on Gly-853 that is involved in catalysis.

The catalysed reaction is (indol-3-yl)acetate + H(+) = skatole + CO2. The protein operates within amino-acid degradation. Its function is as follows. Glycyl radical enzyme that catalyzes the terminal step of tryptophan fermentation, the decarboxylation of indoleacetate to form skatole, a malodorous compound that contributes to the characteristic smell of animal feces. No activity is detected with phenylacetate or p-hydroxyphenylacetate as substrates, indicating high substrate specificity. This is Indoleacetate decarboxylase from Tractidigestivibacter scatoligenes (Olsenella scatoligenes).